The following is a 1325-amino-acid chain: Nephrocystin-3 (1325 aa).

Residues methionine 1–tyrosine 20 form a disordered region. Glycine 2 carries N-myristoyl glycine lipidation. Residues serine 107–valine 203 are a coiled coil. TPR repeat units lie at residues threonine 467–leucine 500, cysteine 881–methionine 914, threonine 916–leucine 937, alanine 938–alanine 971, alanine 980–alanine 1013, alanine 1022–alanine 1055, alanine 1088–valine 1121, alanine 1130–alanine 1163, alanine 1172–serine 1205, alanine 1214–serine 1247, and glycine 1256–glutamate 1289. A disordered region spans residues leucine 1293–serine 1325. Residues serine 1299–serine 1325 are compositionally biased toward polar residues.

In terms of assembly, interacts with NPHP1 and INVS/NPHP2. Interacts (when myristoylated) with UNC119 and UNC119B; interaction is required for localization to cilium. Interacts with CEP164. Component of a complex containing at least ANKS6, INVS, NEK8 and NPHP3. ANKS6 may organize complex assembly by linking INVS and NPHP3 to NEK8 and INVS may target the complex to the proximal ciliary axoneme.

It localises to the cell projection. Its subcellular location is the cilium. Functionally, required for normal ciliary development and function. Inhibits disheveled-1-induced canonical Wnt-signaling activity and may also play a role in the control of non-canonical Wnt signaling that regulates planar cell polarity. Probably acts as a molecular switch between different Wnt signaling pathways. Required for proper convergent extension cell movements. The chain is Nephrocystin-3 (Nphp3) from Mus musculus (Mouse).